The chain runs to 146 residues: Flagellar assembly factor FliW (146 aa).

Belongs to the FliW family. Interacts with translational regulator CsrA and flagellin(s).

The protein localises to the cytoplasm. In terms of biological role, acts as an anti-CsrA protein, binds CsrA and prevents it from repressing translation of its target genes, one of which is flagellin. Binds to flagellin and participates in the assembly of the flagellum. The protein is Flagellar assembly factor FliW of Shouchella clausii (strain KSM-K16) (Alkalihalobacillus clausii).